Consider the following 392-residue polypeptide: Phosphoglycerate kinase (392 aa).

Residues 21–23 (DLN), R36, 59–62 (HLGR), R114, and R147 each bind substrate. Residues K198, E320, and 346 to 349 (GGDT) contribute to the ATP site.

This sequence belongs to the phosphoglycerate kinase family. In terms of assembly, monomer.

It is found in the cytoplasm. The enzyme catalyses (2R)-3-phosphoglycerate + ATP = (2R)-3-phospho-glyceroyl phosphate + ADP. Its pathway is carbohydrate degradation; glycolysis; pyruvate from D-glyceraldehyde 3-phosphate: step 2/5. This Nitrosomonas eutropha (strain DSM 101675 / C91 / Nm57) protein is Phosphoglycerate kinase.